The sequence spans 2426 residues: Protein SON (2426 aa).

Position 2 is an N-acetylalanine (Ala2). Position 16 is an N6-acetyllysine (Lys16). The segment covering Leu24–Glu42 has biased composition (polar residues). A disordered region spans residues Leu24 to Leu56. A Glycyl lysine isopeptide (Lys-Gly) (interchain with G-Cter in SUMO2) cross-link involves residue Lys64. Basic and acidic residues predominate over residues Leu77–Arg88. The disordered stretch occupies residues Leu77 to Phe155. Phosphoserine is present on Ser94. Basic residues predominate over residues Lys106–Lys130. Basic and acidic residues predominate over residues Arg131 to Gly146. Ser142, Ser152, Ser154, Ser160, and Ser283 each carry phosphoserine. Lys288 is modified (N6-acetyllysine). The tract at residues Thr305–Phe328 is disordered. A Phosphothreonine modification is found at Thr400. The disordered stretch occupies residues Pro406–Ser442. Residues Ser409 to Ser442 are compositionally biased toward pro residues. The tract at residues Leu726–Met895 is 17 X 10 AA tandem repeats of L-A-[ST]-[NSG]-[TS]-MDSQM. The tract at residues Asp912 to Pro988 is 11 X 7 AA tandem repeats of [DR]-P-Y-R-[LI][AG][QHP]. The residue at position 950 (Arg950) is an Omega-N-methylarginine. Phosphothreonine is present on Thr959. Ser998 is subject to Phosphoserine. A run of 14 repeats spans residues Glu1006–Ser1011, Glu1014–Ser1019, Glu1021–Ser1026, Glu1030–Ser1035, Glu1038–Ser1043, Glu1046–Ser1051, Glu1055–Ser1060, Glu1063–Ser1068, Glu1071–Ser1076, Asp1080–Ser1085, Asp1089–Ser1094, Asp1100–Ser1105, Asp1111–Ser1116, and Asp1121–Ser1126. The interval Glu1006–Ser1126 is 14 X 6 AA repeats of [ED]-R-S-M-M-S. Arg1007 is subject to Asymmetric dimethylarginine. Residue Arg1022 is modified to Asymmetric dimethylarginine. Ser1035 and Ser1043 each carry phosphoserine. A phosphoserine mark is found at Ser1060 and Ser1068. Ser1082 carries the phosphoserine modification. Positions Tyr1144–Asp1236 are disordered. The segment at Pro1147–Gly1179 is 3 X 11 AA tandem repats of P-P-L-P-P-E-E-P-P-[TME]-[MTG]. Residues Pro1147–Pro1180 are compositionally biased toward pro residues. Polar residues predominate over residues Gln1186–Pro1196. A compositionally biased stretch (low complexity) spans Glu1198 to Ser1224. Residues Val1359–Thr1390 form a 4 X 8 AA tandem repeats of V-L-E-SS-[AVT]-VT region. 2 positions are modified to phosphoserine: Ser1556 and Ser1651. The disordered stretch occupies residues Thr1645–Ser1722. The segment covering Lys1677–Asp1689 has biased composition (basic and acidic residues). Phosphoserine is present on residues Ser1697, Ser1701, Ser1747, Ser1759, Ser1766, Ser1769, Ser1782, and Ser1783. A disordered region spans residues Gly1754–Asp2054. Basic and acidic residues-rich tracts occupy residues Tyr1790 to Glu1801, Arg1809 to Leu1822, and Lys1830 to Ser1845. Composition is skewed to basic residues over residues Arg1846–Ser1909 and Thr1917–Ser1948. 9 tandem repeats follow at residues Pro1925–Ser1931, Pro1934–Ser1952, Pro1953–Thr1959, Pro1960–Thr1966, Pro1967–Thr1973, Pro1974–Thr1980, Pro1981–Thr1987, Pro1988–Thr1994, and Pro1995–Ser2013. The segment at Pro1925–Thr1994 is 7 X 7 AA repeats of P-S-R-R-S-R-[TS]. The tract at residues Pro1934–Ser2013 is 2 X 19 AA repeats of P-S-R-R-R-R-S-R-S-V-V-R-R-R-S-F-S-I-S. Ser1948, Ser1950, and Ser1952 each carry phosphoserine. Residues Arg1955–Ser2009 are compositionally biased toward basic residues. Phosphoserine is present on residues Ser2009, Ser2011, Ser2013, Ser2029, and Ser2031. The tract at residues Ser2013 to Arg2039 is 3 X tandem repeats of [ST]-P-[VLI]-R-[RL]-[RK]-[RF]-S-R. The span at Arg2016–Ser2038 shows a compositional bias: basic residues. A compositionally biased stretch (basic and acidic residues) spans Arg2039–Asp2054. Lys2055 is modified (N6-acetyllysine; alternate). Lys2055 participates in a covalent cross-link: Glycyl lysine isopeptide (Lys-Gly) (interchain with G-Cter in SUMO2); alternate. A Glycyl lysine isopeptide (Lys-Gly) (interchain with G-Cter in SUMO2) cross-link involves residue Lys2092. Residue Ser2129 is modified to Phosphoserine. Lys2149 participates in a covalent cross-link: Glycyl lysine isopeptide (Lys-Gly) (interchain with G-Cter in SUMO2). Phosphothreonine is present on Thr2163. The disordered stretch occupies residues Lys2200–Pro2220. Phosphoserine is present on Ser2238. A G-patch domain is found at Thr2305–Glu2351. Positions His2371 to Tyr2426 constitute a DRBM domain.

Interacts with SRSF2. Associates with the spliceosome. Interacts with the AML1-MTG8 (AML1-ETO) fusion protein, possibly leading to trigger signals inhibiting leukemogenesis. Interacts with USH1G. As to expression, widely expressed, with the higher expression seen in leukocyte and heart.

It is found in the nucleus speckle. Functionally, RNA-binding protein that acts as a mRNA splicing cofactor by promoting efficient splicing of transcripts that possess weak splice sites. Specifically promotes splicing of many cell-cycle and DNA-repair transcripts that possess weak splice sites, such as TUBG1, KATNB1, TUBGCP2, AURKB, PCNT, AKT1, RAD23A, and FANCG. Probably acts by facilitating the interaction between Serine/arginine-rich proteins such as SRSF2 and the RNA polymerase II. Also binds to DNA; binds to the consensus DNA sequence: 5'-GA[GT]AN[CG][AG]CC-3'. May indirectly repress hepatitis B virus (HBV) core promoter activity and transcription of HBV genes and production of HBV virions. Essential for correct RNA splicing of multiple genes critical for brain development, neuronal migration and metabolism, including TUBG1, FLNA, PNKP, WDR62, PSMD3, PCK2, PFKL, IDH2, and ACY1. This is Protein SON (SON) from Homo sapiens (Human).